The sequence spans 385 residues: Glucans biosynthesis protein C (385 aa).

10 consecutive transmembrane segments (helical) span residues 17–37, 60–80, 91–111, 137–157, 173–193, 212–232, 239–259, 274–294, 311–331, and 338–358; these read AWLM…SHTW, MLVF…RYPL, VGIP…IMLQ, ISHL…VWIF, KFSM…YAVI, FIVM…LAFI, LFTT…VAYL, TESV…FSFG, ASLF…AYIT, and WLGF…LYEI.

Belongs to the acyltransferase 3 family. OpgC subfamily.

It is found in the cell membrane. Its pathway is glycan metabolism; osmoregulated periplasmic glucan (OPG) biosynthesis. In terms of biological role, necessary for the succinyl substitution of periplasmic glucans. Could catalyze the transfer of succinyl residues from the cytoplasmic side of the membrane to the nascent glucan backbones on the periplasmic side of the membrane. In Shigella boydii serotype 4 (strain Sb227), this protein is Glucans biosynthesis protein C.